The sequence spans 327 residues: Phenylalanine--tRNA ligase alpha subunit (327 aa).

Position 252 (E252) interacts with Mg(2+).

The protein belongs to the class-II aminoacyl-tRNA synthetase family. Phe-tRNA synthetase alpha subunit type 1 subfamily. In terms of assembly, tetramer of two alpha and two beta subunits. Mg(2+) is required as a cofactor.

The protein resides in the cytoplasm. It carries out the reaction tRNA(Phe) + L-phenylalanine + ATP = L-phenylalanyl-tRNA(Phe) + AMP + diphosphate + H(+). This is Phenylalanine--tRNA ligase alpha subunit from Shewanella frigidimarina (strain NCIMB 400).